A 541-amino-acid polypeptide reads, in one-letter code: Tryptophan N-monooxygenase 1 (541 aa).

The chain crosses the membrane as a helical span at residues 21 to 41 (FSTLYLLSTLQAFVAITLVML). Cys-477 provides a ligand contact to heme.

It belongs to the cytochrome P450 family. The cofactor is heme. As to expression, found in all tissues tested. Highest expression in roots, and low expression in stem.

Its subcellular location is the membrane. The enzyme catalyses L-tryptophan + 2 reduced [NADPH--hemoprotein reductase] + 2 O2 = (E)-(indol-3-yl)acetaldehyde oxime + 2 oxidized [NADPH--hemoprotein reductase] + CO2 + 3 H2O + 2 H(+). Converts tryptophan to indole-3-acetaldoxime, a precursor for tryptophan-derived glucosinolates and indole-3-acetic acid (IAA). Involved in the biosynthetic pathway to 4-hydroxyindole-3-carbonyl nitrile (4-OH-ICN), a cyanogenic metabolite required for inducible pathogen defense. The protein is Tryptophan N-monooxygenase 1 (CYP79B2) of Arabidopsis thaliana (Mouse-ear cress).